The chain runs to 271 residues: Putative pyruvate, phosphate dikinase regulatory protein (271 aa).

150–157 serves as a coordination point for ADP; that stretch reads GVSRTSKT.

Belongs to the pyruvate, phosphate/water dikinase regulatory protein family. PDRP subfamily.

The catalysed reaction is N(tele)-phospho-L-histidyl/L-threonyl-[pyruvate, phosphate dikinase] + ADP = N(tele)-phospho-L-histidyl/O-phospho-L-threonyl-[pyruvate, phosphate dikinase] + AMP + H(+). It catalyses the reaction N(tele)-phospho-L-histidyl/O-phospho-L-threonyl-[pyruvate, phosphate dikinase] + phosphate + H(+) = N(tele)-phospho-L-histidyl/L-threonyl-[pyruvate, phosphate dikinase] + diphosphate. Bifunctional serine/threonine kinase and phosphorylase involved in the regulation of the pyruvate, phosphate dikinase (PPDK) by catalyzing its phosphorylation/dephosphorylation. In Oceanobacillus iheyensis (strain DSM 14371 / CIP 107618 / JCM 11309 / KCTC 3954 / HTE831), this protein is Putative pyruvate, phosphate dikinase regulatory protein.